The sequence spans 330 residues: MKPLRLAFAGTPDFAAASLQAVLDNGHQVVAVLTQPDRAAGRGKKLQQSPVKQLAHSQGITVLQPENLKGEAIHQQLRDLNLDALVVVAYGLIIPQAVLDMPRLGCLNVHGSLLPRWRGAAPIQRAITAGDTETGNTIMQMEAGLDTGPMLLSESLPIGDSETGGELHDRLAAQGARLLVTVLQDLEKYLANATPQPDEGITYAHKLSKAEARLDFRLPTGALYNRIRAFNPFPVSWVPLNGQPMRIWRASESPQPAQANDEPGYILSVDDQGIHVATGDGSLILEELQLPGKRRMAVSDLLRGNPTLFSVGEPLGDAIINESGDHSGNA.

112–115 provides a ligand contact to (6S)-5,6,7,8-tetrahydrofolate; the sequence is SLLP.

Belongs to the Fmt family.

It carries out the reaction L-methionyl-tRNA(fMet) + (6R)-10-formyltetrahydrofolate = N-formyl-L-methionyl-tRNA(fMet) + (6S)-5,6,7,8-tetrahydrofolate + H(+). In terms of biological role, attaches a formyl group to the free amino group of methionyl-tRNA(fMet). The formyl group appears to play a dual role in the initiator identity of N-formylmethionyl-tRNA by promoting its recognition by IF2 and preventing the misappropriation of this tRNA by the elongation apparatus. This Alcanivorax borkumensis (strain ATCC 700651 / DSM 11573 / NCIMB 13689 / SK2) protein is Methionyl-tRNA formyltransferase.